We begin with the raw amino-acid sequence, 256 residues long: MYLEQLKEVNPLTICITNNVVKNFTANGLLALGASPAMSECIEDLEDLLKVADALLINIGTLTKESWQLYQEAIKIANKNQVPVVLDPVAAGASRFRLEVSLDLLKNYSISLLRGNGSEIAALIGEKQASKGADGGKVADLESIAVKANQVFDVPVVVTGETDAIAVRGEVRLLQNGSPLMPLVTGTGCLLGAVLAAFIGSSDRSDDLACLTEAMTVYNVAGEIAEKVAKGKGVGSFQVAFLDALSQMKSEMIMDK.

Methionine 38 is a binding site for substrate. The ATP site is built by arginine 114 and threonine 159. Glycine 186 is a substrate binding site.

Belongs to the Thz kinase family. The cofactor is Mg(2+).

It catalyses the reaction 5-(2-hydroxyethyl)-4-methylthiazole + ATP = 4-methyl-5-(2-phosphooxyethyl)-thiazole + ADP + H(+). Its pathway is cofactor biosynthesis; thiamine diphosphate biosynthesis; 4-methyl-5-(2-phosphoethyl)-thiazole from 5-(2-hydroxyethyl)-4-methylthiazole: step 1/1. In terms of biological role, catalyzes the phosphorylation of the hydroxyl group of 4-methyl-5-beta-hydroxyethylthiazole (THZ). The protein is Hydroxyethylthiazole kinase of Streptococcus agalactiae serotype Ia (strain ATCC 27591 / A909 / CDC SS700).